The following is a 369-amino-acid chain: Galactose-1-phosphate uridylyltransferase (369 aa).

Zn(2+)-binding residues include cysteine 54 and cysteine 57. UDP-alpha-D-glucose-binding positions include alanine 63 and 79–80 (ND). Histidine 127 is a Zn(2+) binding site. Asparagine 172 contributes to the UDP-alpha-D-glucose binding site. Histidine 183 contacts Zn(2+). Histidine 185 serves as the catalytic Tele-UMP-histidine intermediate. Glutamine 187 serves as a coordination point for UDP-alpha-D-glucose. Residues glutamate 201, histidine 300, histidine 317, and histidine 319 each coordinate Fe cation. UDP-alpha-D-glucose-binding positions include 332 to 335 (KFCV) and 337 to 338 (FE).

This sequence belongs to the galactose-1-phosphate uridylyltransferase type 1 family. As to quaternary structure, homodimer. The cofactor is Zn(2+).

The catalysed reaction is alpha-D-galactose 1-phosphate + UDP-alpha-D-glucose = alpha-D-glucose 1-phosphate + UDP-alpha-D-galactose. Its pathway is carbohydrate metabolism; galactose metabolism. The sequence is that of Galactose-1-phosphate uridylyltransferase (gal7) from Schizosaccharomyces pombe (strain 972 / ATCC 24843) (Fission yeast).